The primary structure comprises 334 residues: N-acetyl-gamma-glutamyl-phosphate reductase (334 aa).

The active site involves cysteine 154.

This sequence belongs to the NAGSA dehydrogenase family. Type 1 subfamily.

The protein localises to the cytoplasm. The enzyme catalyses N-acetyl-L-glutamate 5-semialdehyde + phosphate + NADP(+) = N-acetyl-L-glutamyl 5-phosphate + NADPH + H(+). Its pathway is amino-acid biosynthesis; L-arginine biosynthesis; N(2)-acetyl-L-ornithine from L-glutamate: step 3/4. In terms of biological role, catalyzes the NADPH-dependent reduction of N-acetyl-5-glutamyl phosphate to yield N-acetyl-L-glutamate 5-semialdehyde. This is N-acetyl-gamma-glutamyl-phosphate reductase from Shigella flexneri.